The sequence spans 445 residues: MRCKQRVRTTELVDGFRHSAPYVNAHRGKTFVVMLGGEALAQNQFRGILNDVALLHSLGIKVVLVYGARPQIDAALAANGIEPAYHDGVRITDEDSLKVIKQVAGALQFDITARLSMSLSNTPMQGAQINLVSGNFVIAQPLGVDNGVDFCLSGKVRRIDAQGLKRQLDNHCIVLMGPIAASVTGESFNLTAEEIATQVAIKLKADKMIGFSSQNGILDRNGDVIAELMPNDAQKILNKLAEQGSACIGTMAFLKASIDACRNGVPRCHLVSYLDDGALLQELFSREGIGTQIVTESAERLRRASISDIGGILNLIRPLEEQGILVRRSREQLEIEIEQFMLIERDGLVIGCAALYPFEEDNAGEFACLVVHPDYRDADRGSLLLKNIIGQARSRGYSRLFALTTRSIHWFLEHGFVIEDVDALPQKKKQLYNYQRRSKILALDL.

In terms of domain architecture, N-acetyltransferase spans 299–445 (ERLRRASISD…RRSKILALDL (147 aa)).

It belongs to the acetyltransferase family. ArgA subfamily.

It is found in the cytoplasm. The catalysed reaction is L-glutamate + acetyl-CoA = N-acetyl-L-glutamate + CoA + H(+). It functions in the pathway amino-acid biosynthesis; L-arginine biosynthesis; N(2)-acetyl-L-ornithine from L-glutamate: step 1/4. The sequence is that of Amino-acid acetyltransferase (argA) from Shewanella oneidensis (strain ATCC 700550 / JCM 31522 / CIP 106686 / LMG 19005 / NCIMB 14063 / MR-1).